A 209-amino-acid chain; its full sequence is Histidine biosynthesis bifunctional protein HisIE (209 aa).

A phosphoribosyl-AMP cyclohydrolase region spans residues 1–123; it reads MEIEKLLEQV…VLPIDYSLSI (123 aa). A phosphoribosyl-ATP pyrophosphohydrolase region spans residues 124 to 209; it reads LKELEEIIKR…VMNELRRRRK (86 aa).

The protein in the N-terminal section; belongs to the PRA-CH family. It in the C-terminal section; belongs to the PRA-PH family.

The protein localises to the cytoplasm. The enzyme catalyses 1-(5-phospho-beta-D-ribosyl)-ATP + H2O = 1-(5-phospho-beta-D-ribosyl)-5'-AMP + diphosphate + H(+). It carries out the reaction 1-(5-phospho-beta-D-ribosyl)-5'-AMP + H2O = 1-(5-phospho-beta-D-ribosyl)-5-[(5-phospho-beta-D-ribosylamino)methylideneamino]imidazole-4-carboxamide. It functions in the pathway amino-acid biosynthesis; L-histidine biosynthesis; L-histidine from 5-phospho-alpha-D-ribose 1-diphosphate: step 2/9. The protein operates within amino-acid biosynthesis; L-histidine biosynthesis; L-histidine from 5-phospho-alpha-D-ribose 1-diphosphate: step 3/9. This Pyrococcus furiosus (strain ATCC 43587 / DSM 3638 / JCM 8422 / Vc1) protein is Histidine biosynthesis bifunctional protein HisIE (hisI).